A 231-amino-acid chain; its full sequence is Putative S-adenosylmethionine-dependent methyltransferase RcsF (231 aa).

The region spanning 5–142 is the TsaA-like domain; it reads VSPIGYIRSC…YVPYADAVAD (138 aa). S-adenosyl-L-methionine-binding positions include 22–24, 63–64, Arg-91, and 122–125; these read PRQ, HQ, and LDGT.

Belongs to the tRNA methyltransferase O family.

The protein is Putative S-adenosylmethionine-dependent methyltransferase RcsF (rcsF) of Pseudomonas aeruginosa (strain ATCC 15692 / DSM 22644 / CIP 104116 / JCM 14847 / LMG 12228 / 1C / PRS 101 / PAO1).